Reading from the N-terminus, the 227-residue chain is Probable 2-phosphosulfolactate phosphatase (227 aa).

This sequence belongs to the ComB family. Requires Mg(2+) as cofactor.

The enzyme catalyses (2R)-O-phospho-3-sulfolactate + H2O = (2R)-3-sulfolactate + phosphate. The chain is Probable 2-phosphosulfolactate phosphatase from Thermotoga petrophila (strain ATCC BAA-488 / DSM 13995 / JCM 10881 / RKU-1).